The sequence spans 428 residues: 3-phosphoshikimate 1-carboxyvinyltransferase (428 aa).

3-phosphoshikimate-binding residues include lysine 23, serine 24, and arginine 28. Residue lysine 23 participates in phosphoenolpyruvate binding. Phosphoenolpyruvate is bound by residues glycine 97 and arginine 125. Residues serine 170, serine 171, glutamine 172, serine 198, aspartate 314, asparagine 337, and lysine 341 each contribute to the 3-phosphoshikimate site. A phosphoenolpyruvate-binding site is contributed by glutamine 172. Residue aspartate 314 is the Proton acceptor of the active site. Residues arginine 345, arginine 387, and lysine 412 each contribute to the phosphoenolpyruvate site.

This sequence belongs to the EPSP synthase family. As to quaternary structure, monomer.

Its subcellular location is the cytoplasm. It carries out the reaction 3-phosphoshikimate + phosphoenolpyruvate = 5-O-(1-carboxyvinyl)-3-phosphoshikimate + phosphate. The protein operates within metabolic intermediate biosynthesis; chorismate biosynthesis; chorismate from D-erythrose 4-phosphate and phosphoenolpyruvate: step 6/7. In terms of biological role, catalyzes the transfer of the enolpyruvyl moiety of phosphoenolpyruvate (PEP) to the 5-hydroxyl of shikimate-3-phosphate (S3P) to produce enolpyruvyl shikimate-3-phosphate and inorganic phosphate. This is 3-phosphoshikimate 1-carboxyvinyltransferase from Yersinia pseudotuberculosis serotype IB (strain PB1/+).